The following is a 445-amino-acid chain: Homogentisate 1,2-dioxygenase (445 aa).

Position 98 is an N6-acetyllysine (K98). The Fe cation site is built by H335, E341, and H371. K414 carries the post-translational modification N6-succinyllysine.

This sequence belongs to the homogentisate dioxygenase family. In terms of assembly, homohexamer arranged as a dimer of trimers. Fe cation serves as cofactor. Highest expression in the prostate, small intestine, colon, kidney and liver.

The enzyme catalyses homogentisate + O2 = 4-maleylacetoacetate + H(+). It participates in amino-acid degradation; L-phenylalanine degradation; acetoacetate and fumarate from L-phenylalanine: step 4/6. Its function is as follows. Catalyzes the conversion of homogentisate to maleylacetoacetate. This Homo sapiens (Human) protein is Homogentisate 1,2-dioxygenase (HGD).